The chain runs to 361 residues: Phosphoserine aminotransferase (361 aa).

2 residues coordinate L-glutamate: S9 and R42. Pyridoxal 5'-phosphate-binding positions include 76 to 77 (AR), W103, T153, D173, and Q196. K197 carries the N6-(pyridoxal phosphate)lysine modification. 238-239 (NT) contributes to the pyridoxal 5'-phosphate binding site.

The protein belongs to the class-V pyridoxal-phosphate-dependent aminotransferase family. SerC subfamily. In terms of assembly, homodimer. Requires pyridoxal 5'-phosphate as cofactor.

It is found in the cytoplasm. It catalyses the reaction O-phospho-L-serine + 2-oxoglutarate = 3-phosphooxypyruvate + L-glutamate. The enzyme catalyses 4-(phosphooxy)-L-threonine + 2-oxoglutarate = (R)-3-hydroxy-2-oxo-4-phosphooxybutanoate + L-glutamate. It participates in amino-acid biosynthesis; L-serine biosynthesis; L-serine from 3-phospho-D-glycerate: step 2/3. Its pathway is cofactor biosynthesis; pyridoxine 5'-phosphate biosynthesis; pyridoxine 5'-phosphate from D-erythrose 4-phosphate: step 3/5. Functionally, catalyzes the reversible conversion of 3-phosphohydroxypyruvate to phosphoserine and of 3-hydroxy-2-oxo-4-phosphonooxybutanoate to phosphohydroxythreonine. The chain is Phosphoserine aminotransferase from Wigglesworthia glossinidia brevipalpis.